A 102-amino-acid polypeptide reads, in one-letter code: Co-chaperonin GroES (102 aa).

It belongs to the GroES chaperonin family. As to quaternary structure, heptamer of 7 subunits arranged in a ring. Interacts with the chaperonin GroEL.

The protein resides in the cytoplasm. Functionally, together with the chaperonin GroEL, plays an essential role in assisting protein folding. The GroEL-GroES system forms a nano-cage that allows encapsulation of the non-native substrate proteins and provides a physical environment optimized to promote and accelerate protein folding. GroES binds to the apical surface of the GroEL ring, thereby capping the opening of the GroEL channel. This Chlamydia trachomatis serovar L2 (strain ATCC VR-902B / DSM 19102 / 434/Bu) protein is Co-chaperonin GroES.